We begin with the raw amino-acid sequence, 325 residues long: Putative HTH-type transcriptional regulatory protein MK1005 (325 aa).

The HTH cro/C1-type domain occupies 128-190 (VDELDVSRVR…FERRVAELLE (63 aa)). The segment at residues 139–158 (RQLRREGGRITLARAEEADV) is a DNA-binding region (H-T-H motif).

In Methanopyrus kandleri (strain AV19 / DSM 6324 / JCM 9639 / NBRC 100938), this protein is Putative HTH-type transcriptional regulatory protein MK1005.